The following is a 299-amino-acid chain: Oxygen-dependent coproporphyrinogen-III oxidase (299 aa).

Ser-92 is a binding site for substrate. Positions 96 and 106 each coordinate a divalent metal cation. His-106 (proton donor) is an active-site residue. Position 108–110 (108–110) interacts with substrate; the sequence is NVR. A divalent metal cation is bound by residues His-145 and His-175. The tract at residues 239 to 274 is important for dimerization; sequence YVEFNLVYDRGTLFGLQSGGRAESILMSLPPRVRWE. 257–259 contacts substrate; sequence GGR.

Belongs to the aerobic coproporphyrinogen-III oxidase family. In terms of assembly, homodimer. It depends on a divalent metal cation as a cofactor.

The protein resides in the cytoplasm. It catalyses the reaction coproporphyrinogen III + O2 + 2 H(+) = protoporphyrinogen IX + 2 CO2 + 2 H2O. It participates in porphyrin-containing compound metabolism; protoporphyrin-IX biosynthesis; protoporphyrinogen-IX from coproporphyrinogen-III (O2 route): step 1/1. Its function is as follows. Involved in the heme biosynthesis. Catalyzes the aerobic oxidative decarboxylation of propionate groups of rings A and B of coproporphyrinogen-III to yield the vinyl groups in protoporphyrinogen-IX. This chain is Oxygen-dependent coproporphyrinogen-III oxidase, found in Xanthomonas oryzae pv. oryzae (strain MAFF 311018).